The following is a 160-amino-acid chain: Endoribonuclease YbeY (160 aa).

Residues His118, His122, and His128 each coordinate Zn(2+).

Belongs to the endoribonuclease YbeY family. Zn(2+) is required as a cofactor.

Its subcellular location is the cytoplasm. Single strand-specific metallo-endoribonuclease involved in late-stage 70S ribosome quality control and in maturation of the 3' terminus of the 16S rRNA. The sequence is that of Endoribonuclease YbeY from Treponema pallidum (strain Nichols).